The following is a 226-amino-acid chain: Acyl-homoserine-lactone synthase (226 aa).

This sequence belongs to the autoinducer synthase family.

It carries out the reaction a fatty acyl-[ACP] + S-adenosyl-L-methionine = an N-acyl-L-homoserine lactone + S-methyl-5'-thioadenosine + holo-[ACP] + H(+). Its function is as follows. Required for the synthesis of OHHL (N-(3-oxohexanoyl)-L-homoserine lactone), an autoinducer molecule. This Pseudomonas amygdali pv. tabaci (Pseudomonas syringae pv. tabaci) protein is Acyl-homoserine-lactone synthase (psyI).